The primary structure comprises 489 residues: Mitochondrial-processing peptidase subunit beta (489 aa).

The N-terminal 45 residues, 1-45 (MAAAALSRTLLPEARRRLWGFTRRLPLRRAAAQPLYFGGDRLRST), are a transit peptide targeting the mitochondrion. His101 contacts Zn(2+). Catalysis depends on Glu104, which acts as the Proton acceptor. 2 residues coordinate Zn(2+): His105 and Glu181.

Belongs to the peptidase M16 family. In terms of assembly, heterodimer of PMPCA (alpha) and PMPCB (beta) subunits, forming the mitochondrial processing protease (MPP) in which PMPCA is involved in substrate recognition and binding and PMPCB is the catalytic subunit. It depends on Zn(2+) as a cofactor.

Its subcellular location is the mitochondrion matrix. It catalyses the reaction Release of N-terminal transit peptides from precursor proteins imported into the mitochondrion, typically with Arg in position P2.. Binding to PMPCA is required for catalytic activity. In terms of biological role, catalytic subunit of the essential mitochondrial processing protease (MPP), which cleaves the mitochondrial sequence off newly imported precursors proteins. Preferentially, cleaves after an arginine at position P2. Required for PINK1 turnover by coupling PINK1 mitochondrial import and cleavage, which results in subsequent PINK1 proteolysis. The protein is Mitochondrial-processing peptidase subunit beta (Pmpcb) of Mus musculus (Mouse).